Here is a 294-residue protein sequence, read N- to C-terminus: Protein RarD (294 aa).

Over 1 to 11 the chain is Cytoplasmic; sequence MDAKQTRQGVL. The helical transmembrane segment at 12-34 threads the bilayer; it reads LALAAYFIWGIAPAYFKLIYYVP. Positions 18–145 constitute an EamA domain; it reads FIWGIAPAYF…AVCGVLVQLW (128 aa). Residues 35–37 are Periplasmic-facing; sequence ADE. Residues 38 to 60 form a helical membrane-spanning segment; it reads ILTHRVIWSFFFMVALLSVSRQW. Over 61-72 the chain is Cytoplasmic; the sequence is RQVKRLLKTPKK. A helical transmembrane segment spans residues 73–95; sequence IFLLALSAVLVGGNWLLFIWAVN. Over 96–99 the chain is Periplasmic; sequence NHHM. A helical membrane pass occupies residues 100–122; it reads LEASLGYFINPLVNILLGMIFLG. Residues 123–128 lie on the Cytoplasmic side of the membrane; sequence ERFRRM. Residues 129 to 146 form a helical membrane-spanning segment; sequence QWLAVILAVCGVLVQLWT. The Periplasmic portion of the chain corresponds to 147–149; sequence FGS. A helical membrane pass occupies residues 150 to 167; that stretch reads LPIIALGLAFSFAFYGLV. At 168 to 179 the chain is on the cytoplasmic side; that stretch reads RKKIAVEAQTGM. The helical transmembrane segment at 180–197 threads the bilayer; that stretch reads LVETLWLLPVAAIYLFSI. The Periplasmic segment spans residues 198–211; it reads ADSATSHMGQNALS. The chain crosses the membrane as a helical span at residues 212–234; that stretch reads LNLLLMAAGVVTTIPLLCFTGAA. Residues 235-238 are Cytoplasmic-facing; it reads TRLR. A helical transmembrane segment spans residues 239 to 261; the sequence is LSTLGFFQYIGPTLMFLLAVTFY. At 262–270 the chain is on the periplasmic side; the sequence is GEVPGADKM. The chain crosses the membrane as a helical span at residues 271–290; the sequence is VTFAFIWVALAIFVMDAIYT. Residues 291–294 lie on the Cytoplasmic side of the membrane; that stretch reads QRKK.

The protein belongs to the EamA transporter family.

It localises to the cell inner membrane. The sequence is that of Protein RarD (rarD) from Salmonella typhi.